Here is a 149-residue protein sequence, read N- to C-terminus: Transthyretin (149 aa).

An N-terminal signal peptide occupies residues 1-20 (MAFHSLLLLCLAGLAFVSET). A Sulfocysteine modification is found at Cys32. Position 37 (Lys37) interacts with L-thyroxine. Glu64 carries the post-translational modification 4-carboxyglutamate. 2 residues coordinate L-thyroxine: Glu76 and Ser139.

Belongs to the transthyretin family. Homotetramer. Dimer of dimers. In the homotetramer, subunits assemble around a central channel that can accommodate two ligand molecules. Interacts with RBP4. Sulfonation of the reactive cysteine Cys-32 enhances the stability of the native conformation of TTR, avoiding misassembly of the protein leading to amyloid formation.

The protein localises to the secreted. Thyroid hormone-binding protein. Probably transports thyroxine from the bloodstream to the brain. The chain is Transthyretin (TTR) from Notamacropus eugenii (Tammar wallaby).